Here is a 259-residue protein sequence, read N- to C-terminus: Global transcriptional regulator CodY (259 aa).

The segment at Met1–Leu155 is GAF domain. The H-T-H motif DNA-binding region spans Ala203–Arg222. Ser215 carries the post-translational modification Phosphoserine.

This sequence belongs to the CodY family.

It is found in the cytoplasm. Its function is as follows. DNA-binding global transcriptional regulator which is involved in the adaptive response to starvation and acts by directly or indirectly controlling the expression of numerous genes in response to nutrient availability. During rapid exponential growth, CodY is highly active and represses genes whose products allow adaptation to nutrient depletion. The chain is Global transcriptional regulator CodY from Oceanobacillus iheyensis (strain DSM 14371 / CIP 107618 / JCM 11309 / KCTC 3954 / HTE831).